A 101-amino-acid polypeptide reads, in one-letter code: NRDVAACARFIDDFCDTLTPNIYRPRDNGQRCYAVNGHRCDFTVFNTNNGGNPIRASTPNCKTVLRTAANRCPTGGRGKINPNAPFLFAIDPNDGDCSTNF.

Its function is as follows. Has antiviral activity against tobacco mosaic virus and antitumor activity. This is Antiviral protein CAP from Coprinus comatus (Shaggy mane).